A 182-amino-acid chain; its full sequence is MKSMLLRDSVKKASQFQRSLHSDPNQAKILLEERRKLLEEANSSADENDSHSMATIKSHFERLKRDEQLLNGVLKKYDAKQEVLSPEELRDAQNFLEMQEANSLDNSIRGTNELLERAYATREDFDYQNSVLGNVTNRINGAAMSIPFINQILRKTSIRRRRDSIILALLISVLMLLFLFFH.

Over 1-163 (MKSMLLRDSV…RKTSIRRRRD (163 aa)) the chain is Cytoplasmic. Residues 164-181 (SIILALLISVLMLLFLFF) form a helical; Anchor for type IV membrane protein membrane-spanning segment. Residue histidine 182 is a topological domain, vesicular.

Belongs to the GOSR1 family. In terms of assembly, component of a SNARE complex consisting of sed5, gos1, ykt6, and sft1.

Its subcellular location is the golgi apparatus membrane. In terms of biological role, nonessential SNARE involved in retrograde transport within the Golgi complex. The protein is Protein transport protein gos1 (gos1) of Schizosaccharomyces pombe (strain 972 / ATCC 24843) (Fission yeast).